Here is a 336-residue protein sequence, read N- to C-terminus: Ketol-acid reductoisomerase (NADP(+)) (336 aa).

A KARI N-terminal Rossmann domain is found at 5–185; sequence SKIYTDKDSN…GATRAGVIPT (181 aa). NADP(+) contacts are provided by residues 28–31, S56, and 86–89; these read YGSQ and DMVQ. H111 is an active-site residue. Position 137 (G137) interacts with NADP(+). A KARI C-terminal knotted domain is found at 186-331; the sequence is TFKEETETDL…NQLKDLIQKG (146 aa). Mg(2+) contacts are provided by D194, E198, E230, and E234. A substrate-binding site is contributed by S255.

It belongs to the ketol-acid reductoisomerase family. Requires Mg(2+) as cofactor.

It catalyses the reaction (2R)-2,3-dihydroxy-3-methylbutanoate + NADP(+) = (2S)-2-acetolactate + NADPH + H(+). It carries out the reaction (2R,3R)-2,3-dihydroxy-3-methylpentanoate + NADP(+) = (S)-2-ethyl-2-hydroxy-3-oxobutanoate + NADPH + H(+). The protein operates within amino-acid biosynthesis; L-isoleucine biosynthesis; L-isoleucine from 2-oxobutanoate: step 2/4. Its pathway is amino-acid biosynthesis; L-valine biosynthesis; L-valine from pyruvate: step 2/4. In terms of biological role, involved in the biosynthesis of branched-chain amino acids (BCAA). Catalyzes an alkyl-migration followed by a ketol-acid reduction of (S)-2-acetolactate (S2AL) to yield (R)-2,3-dihydroxy-isovalerate. In the isomerase reaction, S2AL is rearranged via a Mg-dependent methyl migration to produce 3-hydroxy-3-methyl-2-ketobutyrate (HMKB). In the reductase reaction, this 2-ketoacid undergoes a metal-dependent reduction by NADPH to yield (R)-2,3-dihydroxy-isovalerate. This chain is Ketol-acid reductoisomerase (NADP(+)), found in Saccharolobus islandicus (strain Y.N.15.51 / Yellowstone #2) (Sulfolobus islandicus).